The following is a 329-amino-acid chain: Putative L-ascorbate peroxidase 6 (329 aa).

Histidine 123 (proton acceptor) is an active-site residue. Residue histidine 244 coordinates heme b.

This sequence belongs to the peroxidase family. Ascorbate peroxidase subfamily. It depends on heme b as a cofactor.

It catalyses the reaction L-ascorbate + H2O2 = L-dehydroascorbate + 2 H2O. In terms of biological role, plays a key role in hydrogen peroxide removal. The sequence is that of Putative L-ascorbate peroxidase 6 (APX6) from Arabidopsis thaliana (Mouse-ear cress).